The chain runs to 69 residues: uncharacterized protein (69 aa).

This is an uncharacterized protein from Acheta domesticus (House cricket).